The chain runs to 226 residues: N-acetylmuramic acid 6-phosphate phosphatase (226 aa).

Residue D12 is the Nucleophile of the active site. Mg(2+) contacts are provided by D12, D14, and D171. Catalysis depends on D14, which acts as the Proton donor.

The protein belongs to the HAD-like hydrolase superfamily. CbbY/CbbZ/Gph/YieH family. Phosphatase MupP subfamily. Mg(2+) serves as cofactor.

The enzyme catalyses N-acetyl-D-muramate 6-phosphate + H2O = N-acetyl-D-muramate + phosphate. It functions in the pathway cell wall biogenesis; peptidoglycan recycling. Specifically catalyzes the dephosphorylation of N-acetylmuramate 6-phosphate (MurNAc-6P) to MurNac. Is involved in peptidoglycan recycling as part of a cell wall recycling pathway that bypasses de novo biosynthesis of the peptidoglycan precursor UDP-MurNAc. Plays a role in intrinsic resistance to fosfomycin, which targets the de novo synthesis of UDP-MurNAc. The sequence is that of N-acetylmuramic acid 6-phosphate phosphatase from Pseudomonas aeruginosa (strain ATCC 15692 / DSM 22644 / CIP 104116 / JCM 14847 / LMG 12228 / 1C / PRS 101 / PAO1).